The sequence spans 203 residues: bMERB domain-containing protein 1 (203 aa).

One can recognise a bMERB domain in the interval 3 to 149; it reads LKQSLSVHLE…EQEEDKEMAD (147 aa). Residues 160-186 form a disordered region; that stretch reads KVTKSSASSRAEKKAEPPPSKPTVAKT.

This is bMERB domain-containing protein 1 (Bmerb1) from Rattus norvegicus (Rat).